A 148-amino-acid chain; its full sequence is Ribonuclease H (148 aa).

The 142-residue stretch at 1–142 (MSDSVEIYTD…ADQLANRGVD (142 aa)) folds into the RNase H type-1 domain. 4 residues coordinate Mg(2+): aspartate 10, glutamate 48, aspartate 70, and aspartate 134. Residues 129-148 (GNERADQLANRGVDEVRAQR) form a disordered region.

It belongs to the RNase H family. Monomer. Mg(2+) serves as cofactor.

The protein resides in the cytoplasm. It catalyses the reaction Endonucleolytic cleavage to 5'-phosphomonoester.. Functionally, endonuclease that specifically degrades the RNA of RNA-DNA hybrids. The chain is Ribonuclease H from Pseudomonas entomophila (strain L48).